The chain runs to 548 residues: Medium/long-chain-fatty-acid--CoA/3-oxocholest-4-en-26-oate--CoA ligase (548 aa).

Residues 174–182 (TGGTTGFPK), Asp-415, Arg-430, and Lys-521 each bind ATP. Residues 520 to 541 (GKPDYRWAKEQTEARPADDVHA) are compositionally biased toward basic and acidic residues. The disordered stretch occupies residues 520–548 (GKPDYRWAKEQTEARPADDVHAGHVTSGG).

Belongs to the ATP-dependent AMP-binding enzyme family.

The enzyme catalyses a medium-chain fatty acid + ATP + CoA = a medium-chain fatty acyl-CoA + AMP + diphosphate. The catalysed reaction is a long-chain fatty acid + ATP + CoA = a long-chain fatty acyl-CoA + AMP + diphosphate. It carries out the reaction (25S)-3-oxocholest-4-en-26-oate + ATP + CoA = (25S)-3-oxocholest-4-en-26-oyl-CoA + AMP + diphosphate. The protein operates within lipid metabolism; fatty acid biosynthesis. It participates in steroid metabolism; cholesterol metabolism. Functionally, catalyzes the activation of medium/long-chain fatty acids as acyl-coenzyme A (acyl-CoA), which are then transferred to the multifunctional polyketide synthase (PKS) type III for further chain extension. Also involved in the degradation of cholesterol via the degradation of the side chains of C-24 branched-chain sterols. Catalyzes the ATP-dependent CoA thioesterification of the sterol 3-oxocholest-4-en-26-oate to yield 3-oxocholest-4-en-26-oyl-CoA. In Mycobacterium bovis (strain ATCC BAA-935 / AF2122/97), this protein is Medium/long-chain-fatty-acid--CoA/3-oxocholest-4-en-26-oate--CoA ligase.